The sequence spans 862 residues: Eukaryotic translation initiation factor 3 subunit C (862 aa).

A disordered region spans residues 1–81; sequence MSSRFFYGGG…EEEEKVTVVK (81 aa). The segment covering 17 to 54 has biased composition (acidic residues); that stretch reads SSDEEELYSDREEEEKSEEEESSEEEDETSEEEESDEE. A compositionally biased stretch (basic and acidic residues) spans 55-65; that stretch reads TGAKKFLKDVA. Acidic residues predominate over residues 66-75; the sequence is SDSEEEEEEE. A PCI domain is found at 600–774; that stretch reads FHMHINLELL…NAIVFRKGVE (175 aa). Residues 813–862 form a disordered region; the sequence is RDQGAGARGGRGSGRGGQARGGPRFPGGQQGRRPGGQQFGGGALGGAIKA. The segment covering 818–862 has biased composition (gly residues); sequence GARGGRGSGRGGQARGGPRFPGGQQGRRPGGQQFGGGALGGAIKA.

Belongs to the eIF-3 subunit C family. In terms of assembly, component of the eukaryotic translation initiation factor 3 (eIF-3) complex.

It localises to the cytoplasm. Functionally, component of the eukaryotic translation initiation factor 3 (eIF-3) complex, which is involved in protein synthesis of a specialized repertoire of mRNAs and, together with other initiation factors, stimulates binding of mRNA and methionyl-tRNAi to the 40S ribosome. The eIF-3 complex specifically targets and initiates translation of a subset of mRNAs involved in cell proliferation. The sequence is that of Eukaryotic translation initiation factor 3 subunit C (nip1) from Neosartorya fischeri (strain ATCC 1020 / DSM 3700 / CBS 544.65 / FGSC A1164 / JCM 1740 / NRRL 181 / WB 181) (Aspergillus fischerianus).